We begin with the raw amino-acid sequence, 363 residues long: Pyrimidine monooxygenase RutA (363 aa).

FMN is bound by residues 49–50, Asn115, Glu124, 140–141, and Ser190; these read IK and RY.

Belongs to the NtaA/SnaA/DszA monooxygenase family. RutA subfamily.

It carries out the reaction uracil + FMNH2 + NADH + O2 = (Z)-3-ureidoacrylate + FMN + NAD(+) + H2O + H(+). The enzyme catalyses thymine + FMNH2 + NADH + O2 = (Z)-2-methylureidoacrylate + FMN + NAD(+) + H2O + H(+). In terms of biological role, catalyzes the pyrimidine ring opening between N-3 and C-4 by an unusual flavin hydroperoxide-catalyzed mechanism, adding oxygen atoms in the process to yield ureidoacrylate peracid, that immediately reacts with FMN forming ureidoacrylate and FMN-N(5)-oxide. The FMN-N(5)-oxide reacts spontaneously with NADH to produce FMN. Requires the flavin reductase RutF to regenerate FMN in vivo. The sequence is that of Pyrimidine monooxygenase RutA from Rhizobium rhizogenes (strain K84 / ATCC BAA-868) (Agrobacterium radiobacter).